The following is a 160-amino-acid chain: Ribosomal RNA large subunit methyltransferase H (160 aa).

Residues Leu-77, Gly-109, and 128-133 (FSRLTF) contribute to the S-adenosyl-L-methionine site.

The protein belongs to the RNA methyltransferase RlmH family. In terms of assembly, homodimer.

It is found in the cytoplasm. The catalysed reaction is pseudouridine(1915) in 23S rRNA + S-adenosyl-L-methionine = N(3)-methylpseudouridine(1915) in 23S rRNA + S-adenosyl-L-homocysteine + H(+). In terms of biological role, specifically methylates the pseudouridine at position 1915 (m3Psi1915) in 23S rRNA. This chain is Ribosomal RNA large subunit methyltransferase H, found in Desulfitobacterium hafniense (strain DSM 10664 / DCB-2).